Consider the following 195-residue polypeptide: Early E3 22.2 kDa glycoprotein (195 aa).

Asn20, Asn61, Asn76, Asn88, Asn126, and Asn139 each carry an N-linked (GlcNAc...) asparagine; by host glycan.

This chain is Early E3 22.2 kDa glycoprotein, found in Canine adenovirus serotype 1 (strain Glaxo) (CAdV-1).